We begin with the raw amino-acid sequence, 288 residues long: Acetyl-coenzyme A carboxylase carboxyl transferase subunit beta (288 aa).

In terms of domain architecture, CoA carboxyltransferase N-terminal spans 34–288 (LFAKCPACKH…HLVAFHGGGQ (255 aa)). Zn(2+) is bound by residues cysteine 38, cysteine 41, cysteine 56, and cysteine 59. Residues 38–59 (CPACKHMIYKKDLGLAKICPTC) form a C4-type zinc finger.

It belongs to the AccD/PCCB family. Acetyl-CoA carboxylase is a heterohexamer composed of biotin carboxyl carrier protein (AccB), biotin carboxylase (AccC) and two subunits each of ACCase subunit alpha (AccA) and ACCase subunit beta (AccD). Zn(2+) serves as cofactor.

The protein resides in the cytoplasm. The enzyme catalyses N(6)-carboxybiotinyl-L-lysyl-[protein] + acetyl-CoA = N(6)-biotinyl-L-lysyl-[protein] + malonyl-CoA. Its pathway is lipid metabolism; malonyl-CoA biosynthesis; malonyl-CoA from acetyl-CoA: step 1/1. Component of the acetyl coenzyme A carboxylase (ACC) complex. Biotin carboxylase (BC) catalyzes the carboxylation of biotin on its carrier protein (BCCP) and then the CO(2) group is transferred by the transcarboxylase to acetyl-CoA to form malonyl-CoA. This chain is Acetyl-coenzyme A carboxylase carboxyl transferase subunit beta, found in Streptococcus pyogenes serotype M1.